Reading from the N-terminus, the 107-residue chain is CLAVATA3/ESR (CLE)-related protein 13 (107 aa).

Residues Met1–Gly25 form the signal peptide. Asn29 is a glycosylation site (N-linked (GlcNAc...) asparagine). Positions Ala79–His107 are disordered. Residues Ile87 to Leu97 are compositionally biased toward basic and acidic residues. A hydroxyproline mark is found at Pro99 and Pro102. An O-linked (Ara...) hydroxyproline glycan is attached at Pro102.

This sequence belongs to the CLV3/ESR signal peptide family. In terms of processing, the O-glycosylation (arabinosylation) of the hydroxyproline Pro-102 enhances binding affinity of the CLE13p peptide for its receptor. As to expression, mostly expressed in seedlings, roots, flowers, stems and apex, and, to a lower extent, in leaves and siliques.

It localises to the secreted. The protein resides in the extracellular space. In terms of biological role, extracellular signal peptide that regulates cell fate. Represses root apical meristem maintenance. Regulates the transition of protophloem cells from proliferation to differentiation, thus impinging on postembryonic growth capacity of the root meristem; this signaling pathway requires CRN and CLV2. This chain is CLAVATA3/ESR (CLE)-related protein 13, found in Arabidopsis thaliana (Mouse-ear cress).